A 339-amino-acid chain; its full sequence is Ribosomal RNA small subunit methyltransferase H (339 aa).

S-adenosyl-L-methionine-binding positions include 36–38, Asp55, Phe82, Asp103, and Gln110; that span reads GGY. Residues 286–319 are disordered; the sequence is GPIGPSEAEATANPRARSAKLRAGERTDAPIPEP.

This sequence belongs to the methyltransferase superfamily. RsmH family.

Its subcellular location is the cytoplasm. It carries out the reaction cytidine(1402) in 16S rRNA + S-adenosyl-L-methionine = N(4)-methylcytidine(1402) in 16S rRNA + S-adenosyl-L-homocysteine + H(+). Its function is as follows. Specifically methylates the N4 position of cytidine in position 1402 (C1402) of 16S rRNA. In Methylobacterium nodulans (strain LMG 21967 / CNCM I-2342 / ORS 2060), this protein is Ribosomal RNA small subunit methyltransferase H.